A 324-amino-acid chain; its full sequence is Glutathione synthetase (324 aa).

Residues 133–317 form the ATP-grasp domain; sequence KMYALQFTKA…LAHQVIQWVE (185 aa). 159 to 215 contributes to the ATP binding site; that stretch reads VEAKGATVLKPLGNKAGEGILFLQAGDRNFNSIVELSTQQGRLPVMVQTYLPEAKEG. Glutamate 288 and asparagine 290 together coordinate Mg(2+).

The protein belongs to the prokaryotic GSH synthase family. The cofactor is Mg(2+). Mn(2+) serves as cofactor.

The enzyme catalyses gamma-L-glutamyl-L-cysteine + glycine + ATP = glutathione + ADP + phosphate + H(+). It functions in the pathway sulfur metabolism; glutathione biosynthesis; glutathione from L-cysteine and L-glutamate: step 2/2. The protein is Glutathione synthetase of Nostoc sp. (strain PCC 7120 / SAG 25.82 / UTEX 2576).